The following is a 462-amino-acid chain: Siroheme synthase (462 aa).

Residues M1 to I203 form a precorrin-2 dehydrogenase /sirohydrochlorin ferrochelatase region. NAD(+)-binding positions include N22 to V23 and D43 to D44. A Phosphoserine modification is found at S128. Residues G215–Q462 form a uroporphyrinogen-III C-methyltransferase region. P224 contributes to the S-adenosyl-L-methionine binding site. D247 (proton acceptor) is an active-site residue. The active-site Proton donor is K269. S-adenosyl-L-methionine-binding positions include G300–D302, I305, T330–A331, M383, and G412.

In the N-terminal section; belongs to the precorrin-2 dehydrogenase / sirohydrochlorin ferrochelatase family. It in the C-terminal section; belongs to the precorrin methyltransferase family.

It carries out the reaction uroporphyrinogen III + 2 S-adenosyl-L-methionine = precorrin-2 + 2 S-adenosyl-L-homocysteine + H(+). The enzyme catalyses precorrin-2 + NAD(+) = sirohydrochlorin + NADH + 2 H(+). It catalyses the reaction siroheme + 2 H(+) = sirohydrochlorin + Fe(2+). It participates in cofactor biosynthesis; adenosylcobalamin biosynthesis; precorrin-2 from uroporphyrinogen III: step 1/1. Its pathway is cofactor biosynthesis; adenosylcobalamin biosynthesis; sirohydrochlorin from precorrin-2: step 1/1. It functions in the pathway porphyrin-containing compound metabolism; siroheme biosynthesis; precorrin-2 from uroporphyrinogen III: step 1/1. The protein operates within porphyrin-containing compound metabolism; siroheme biosynthesis; siroheme from sirohydrochlorin: step 1/1. It participates in porphyrin-containing compound metabolism; siroheme biosynthesis; sirohydrochlorin from precorrin-2: step 1/1. Its function is as follows. Multifunctional enzyme that catalyzes the SAM-dependent methylations of uroporphyrinogen III at position C-2 and C-7 to form precorrin-2 via precorrin-1. Then it catalyzes the NAD-dependent ring dehydrogenation of precorrin-2 to yield sirohydrochlorin. Finally, it catalyzes the ferrochelation of sirohydrochlorin to yield siroheme. The sequence is that of Siroheme synthase from Baumannia cicadellinicola subsp. Homalodisca coagulata.